A 477-amino-acid polypeptide reads, in one-letter code: Aspartyl/glutamyl-tRNA(Asn/Gln) amidotransferase subunit B (477 aa).

The protein belongs to the GatB/GatE family. GatB subfamily. As to quaternary structure, heterotrimer of A, B and C subunits.

It carries out the reaction L-glutamyl-tRNA(Gln) + L-glutamine + ATP + H2O = L-glutaminyl-tRNA(Gln) + L-glutamate + ADP + phosphate + H(+). The catalysed reaction is L-aspartyl-tRNA(Asn) + L-glutamine + ATP + H2O = L-asparaginyl-tRNA(Asn) + L-glutamate + ADP + phosphate + 2 H(+). Allows the formation of correctly charged Asn-tRNA(Asn) or Gln-tRNA(Gln) through the transamidation of misacylated Asp-tRNA(Asn) or Glu-tRNA(Gln) in organisms which lack either or both of asparaginyl-tRNA or glutaminyl-tRNA synthetases. The reaction takes place in the presence of glutamine and ATP through an activated phospho-Asp-tRNA(Asn) or phospho-Glu-tRNA(Gln). The polypeptide is Aspartyl/glutamyl-tRNA(Asn/Gln) amidotransferase subunit B (Bdellovibrio bacteriovorus (strain ATCC 15356 / DSM 50701 / NCIMB 9529 / HD100)).